A 371-amino-acid polypeptide reads, in one-letter code: Glutamate 5-kinase (371 aa).

Lys-8 contributes to the ATP binding site. Positions 49, 136, and 149 each coordinate substrate. ATP contacts are provided by residues 169–170 (TD) and 213–219 (TGGMATK). Residues 278 to 356 (TGKLILDDGA…EDIPQVLGYA (79 aa)) enclose the PUA domain.

It belongs to the glutamate 5-kinase family.

It is found in the cytoplasm. It carries out the reaction L-glutamate + ATP = L-glutamyl 5-phosphate + ADP. It functions in the pathway amino-acid biosynthesis; L-proline biosynthesis; L-glutamate 5-semialdehyde from L-glutamate: step 1/2. Functionally, catalyzes the transfer of a phosphate group to glutamate to form L-glutamate 5-phosphate. This chain is Glutamate 5-kinase, found in Acaryochloris marina (strain MBIC 11017).